The sequence spans 662 residues: Acetyl-coenzyme A synthetase (662 aa).

CoA is bound by residues 197 to 200 (RKGK) and Thr317. Residues 393-395 (GEP), 417-422 (DTWWQT), Asp510, and Arg525 contribute to the ATP site. CoA is bound at residue Ser533. Arg536 contributes to the ATP binding site. Mg(2+) is bound by residues His549 and Val552. Lys623 carries the post-translational modification N6-acetyllysine.

This sequence belongs to the ATP-dependent AMP-binding enzyme family. The cofactor is Mg(2+). Acetylated. Deacetylation by the SIR2-homolog deacetylase activates the enzyme.

It carries out the reaction acetate + ATP + CoA = acetyl-CoA + AMP + diphosphate. Catalyzes the conversion of acetate into acetyl-CoA (AcCoA), an essential intermediate at the junction of anabolic and catabolic pathways. AcsA undergoes a two-step reaction. In the first half reaction, AcsA combines acetate with ATP to form acetyl-adenylate (AcAMP) intermediate. In the second half reaction, it can then transfer the acetyl group from AcAMP to the sulfhydryl group of CoA, forming the product AcCoA. The sequence is that of Acetyl-coenzyme A synthetase from Helicobacter pylori (strain P12).